The chain runs to 361 residues: Histidinol-phosphate aminotransferase (361 aa).

An N6-(pyridoxal phosphate)lysine modification is found at Lys-219.

This sequence belongs to the class-II pyridoxal-phosphate-dependent aminotransferase family. Histidinol-phosphate aminotransferase subfamily. Homodimer. The cofactor is pyridoxal 5'-phosphate.

It catalyses the reaction L-histidinol phosphate + 2-oxoglutarate = 3-(imidazol-4-yl)-2-oxopropyl phosphate + L-glutamate. Its pathway is amino-acid biosynthesis; L-histidine biosynthesis; L-histidine from 5-phospho-alpha-D-ribose 1-diphosphate: step 7/9. This is Histidinol-phosphate aminotransferase from Acinetobacter baumannii (strain SDF).